The following is a 430-amino-acid chain: ATP-dependent RNA helicase RhlB (430 aa).

Residues 9-37 (QKFSDFALHPQVIEALESKGFHYCTPIQA) carry the Q motif motif. Residues 40 to 219 (LPLTLSGRDV…FEQMNNAEYV (180 aa)) form the Helicase ATP-binding domain. 53-60 (AQTGTGKT) provides a ligand contact to ATP. Positions 165–168 (DEAD) match the DEAD box motif. The Helicase C-terminal domain occupies 245-390 (RLLQTLLEEE…LSKYNSDALM (146 aa)). The segment at 392 to 430 (DLPAPKRLTRPPRSNNGPRRHNSAPRRSGAPRNNRKRAD) is disordered.

Belongs to the DEAD box helicase family. RhlB subfamily. Component of the RNA degradosome, which is a multiprotein complex involved in RNA processing and mRNA degradation.

The protein resides in the cytoplasm. It catalyses the reaction ATP + H2O = ADP + phosphate + H(+). Functionally, DEAD-box RNA helicase involved in RNA degradation. Has RNA-dependent ATPase activity and unwinds double-stranded RNA. The sequence is that of ATP-dependent RNA helicase RhlB from Pectobacterium atrosepticum (strain SCRI 1043 / ATCC BAA-672) (Erwinia carotovora subsp. atroseptica).